We begin with the raw amino-acid sequence, 435 residues long: Serine/threonine-protein kinase 40 (435 aa).

Positions 1–10 (MKRRASDRGA) are enriched in basic and acidic residues. The interval 1–25 (MKRRASDRGAGETSARAKALGSGIS) is disordered. Residues 35–332 (FILGPRLGNS…DVLEALSAII (298 aa)) form the Protein kinase domain. ATP-binding positions include 41 to 49 (LGNSPVPSI) and Lys-66. Asp-197 functions as the Proton acceptor in the catalytic mechanism.

This sequence belongs to the protein kinase superfamily. CAMK Ser/Thr protein kinase family.

Its subcellular location is the nucleus. It is found in the cytoplasm. The catalysed reaction is L-seryl-[protein] + ATP = O-phospho-L-seryl-[protein] + ADP + H(+). It carries out the reaction L-threonyl-[protein] + ATP = O-phospho-L-threonyl-[protein] + ADP + H(+). May be a negative regulator of NF-kappa-B and p53-mediated gene transcription. This Pongo abelii (Sumatran orangutan) protein is Serine/threonine-protein kinase 40 (STK40).